The following is a 453-amino-acid chain: Asparagine--tRNA ligase (453 aa).

This sequence belongs to the class-II aminoacyl-tRNA synthetase family. In terms of assembly, homodimer.

It is found in the cytoplasm. The enzyme catalyses tRNA(Asn) + L-asparagine + ATP = L-asparaginyl-tRNA(Asn) + AMP + diphosphate + H(+). The protein is Asparagine--tRNA ligase of Malacoplasma penetrans (strain HF-2) (Mycoplasma penetrans).